Here is a 100-residue protein sequence, read N- to C-terminus: Small ubiquitin-related modifier 1 (100 aa).

In terms of domain architecture, Ubiquitin-like spans glutamate 19 to glycine 96. Glycine 96 participates in a covalent cross-link: Glycyl lysine isopeptide (Gly-Lys) (interchain with K-? in acceptor proteins). A propeptide spanning residues cysteine 97–aspartate 100 is cleaved from the precursor.

This sequence belongs to the ubiquitin family. SUMO subfamily. Interacts with sae2, ube2i, ranbp2, pias1 and pias2. Covalently attached to a number of proteins. Post-translationally, cleavage of precursor form by a sentrin-specific protease is necessary for function.

The protein localises to the nucleus membrane. The protein resides in the nucleus speckle. Its subcellular location is the cytoplasm. It localises to the nucleus. It is found in the PML body. The protein localises to the cell membrane. Its function is as follows. Ubiquitin-like protein that can be covalently attached to proteins as a monomer or a lysine-linked polymer. Covalent attachment via an isopeptide bond to its substrates requires prior activation by the E1 complex sae1-sae2 and linkage to the E2 enzyme ube2i. This post-translational modification on lysine residues of proteins plays a crucial role in a number of cellular processes such as nuclear transport, DNA replication and repair, mitosis and signal transduction. Polymeric sumo1 chains are also susceptible to polyubiquitination which functions as a signal for proteasomal degradation of modified proteins. This Danio rerio (Zebrafish) protein is Small ubiquitin-related modifier 1 (sumo1).